Reading from the N-terminus, the 228-residue chain is Phosphoglycolate phosphatase (228 aa).

Aspartate 12 (nucleophile) is an active-site residue. Aspartate 12, aspartate 14, and aspartate 177 together coordinate Mg(2+).

The protein belongs to the HAD-like hydrolase superfamily. CbbY/CbbZ/Gph/YieH family. Requires Mg(2+) as cofactor.

It carries out the reaction 2-phosphoglycolate + H2O = glycolate + phosphate. It participates in organic acid metabolism; glycolate biosynthesis; glycolate from 2-phosphoglycolate: step 1/1. Specifically catalyzes the dephosphorylation of 2-phosphoglycolate. Is involved in the dissimilation of the intracellular 2-phosphoglycolate formed during the DNA repair of 3'-phosphoglycolate ends, a major class of DNA lesions induced by oxidative stress. This Vibrio parahaemolyticus serotype O3:K6 (strain RIMD 2210633) protein is Phosphoglycolate phosphatase.